We begin with the raw amino-acid sequence, 734 residues long: PI-PLC X-box domain-containing protein DDB_G0293730 (734 aa).

The stretch at 8-70 forms a coiled coil; it reads IKNILLKIEK…ELNEKLIVEK (63 aa). A PI-PLC X-box domain is found at 440-604; that stretch reads KLKDRKVRNL…CIYDDLVNPL (165 aa).

In Dictyostelium discoideum (Social amoeba), this protein is PI-PLC X-box domain-containing protein DDB_G0293730.